The following is a 1643-amino-acid chain: Lysine-specific demethylase 6B (1643 aa).

Disordered regions lie at residues 52–88, 190–680, 704–807, and 822–1096; these read GQPP…PLHG, AKRG…PLED, ESIR…LKSL, and GAAV…RSLS. Composition is skewed to low complexity over residues 63-74 and 212-223; these read SHGSSSGHPSKP and AALSGPSGEEGL. Ser-224 carries the phosphoserine modification. Over residues 242 to 266 the composition is skewed to pro residues; sequence PGLPLPPPPLPPPPPPPPPPPPPLP. Positions 291–307 are enriched in basic and acidic residues; that stretch reads GPERKGSAPPERQEQRH. Pro residues predominate over residues 332 to 342; it reads AAPPGPGPRPP. Residues 359–370 show a composition bias toward basic and acidic residues; sequence DLRESRVQRSRM. A compositionally biased stretch (low complexity) spans 394-412; it reads PGTTTSSSSSSSSNTGLRG. Pro residues predominate over residues 460–484; it reads SLPPGPSSPPPPPCPRLLRPPPPPA. The segment covering 550–569 has biased composition (low complexity); that stretch reads TTSSSNSNSGSHSSSPAGPV. Pro residues-rich tracts occupy residues 584-600 and 641-658; these read LPRP…PPLV and GPGP…PVPP. The span at 704–714 shows a compositional bias: basic and acidic residues; the sequence is ESIRKEEEQQQ. Over residues 740 to 764 the composition is skewed to low complexity; the sequence is TAPTTTAPAVAVTTTTTTTTTTTAT. Positions 772–800 are enriched in pro residues; it reads PPALPPPPPLAKFPPPSQPQPPPPPPPSP. Residues 843 to 877 are compositionally biased toward low complexity; that stretch reads SGATALPPTSAAPSAQGSPQPSASSSSQFSTSGGP. Positions 889–904 are enriched in pro residues; it reads VPGPMTPTQPPPPLSL. Residues 916 to 929 show a composition bias toward basic and acidic residues; the sequence is EISRACETLVERVG. Positions 972–989 are enriched in basic residues; the sequence is CKRRQKEHQKEHRRHRRA. A compositionally biased stretch (basic and acidic residues) spans 990 to 1003; that stretch reads CKDSVGRRPREGRA. Over residues 1004–1016 the composition is skewed to basic residues; the sequence is KAKAKVPKEKSRR. The segment covering 1047–1067 has biased composition (pro residues); it reads PTAPAPPSAPAPSAQPTPPSA. Lys-1109 is covalently cross-linked (Glycyl lysine isopeptide (Lys-Gly) (interchain with G-Cter in SUMO2)). Residues 1288 to 1325 are disordered; sequence FQESLQEEKESEDEESEEPDSTTGTPPSSAPDPKNHHI. Positions 1296–1307 are enriched in acidic residues; the sequence is KESEDEESEEPD. Residues 1339-1502 form the JmjC domain; the sequence is RWKPQLQELL…YQLALERYEW (164 aa). Fe cation contacts are provided by His-1390, Glu-1392, and His-1470. 4 residues coordinate Zn(2+): Cys-1575, Cys-1578, Cys-1602, and Cys-1605.

It belongs to the UTX family. Interacts with TLE1. Component of the MLL4 complex, at least composed of KMT2B/MLL4, ASH2L, RBBP5, WDR5, and KDM6B. Interacts with TBX21, SMARCA4, SMARCC1 and SMARCC2. The cofactor is L-ascorbate. Fe(2+) is required as a cofactor.

The protein resides in the nucleus. It carries out the reaction N(6),N(6),N(6)-trimethyl-L-lysyl(27)-[histone H3] + 2 2-oxoglutarate + 2 O2 = N(6)-methyl-L-lysyl(27)-[histone H3] + 2 formaldehyde + 2 succinate + 2 CO2. In terms of biological role, histone demethylase that specifically demethylates 'Lys-27' of histone H3, thereby playing a central role in histone code. Demethylates trimethylated and dimethylated H3 'Lys-27'. Plays a central role in regulation of posterior development, by regulating HOX gene expression. Involved in inflammatory response by participating in macrophage differentiation in case of inflammation by regulating gene expression and macrophage differentiation. Plays a demethylase-independent role in chromatin remodeling to regulate T-box family member-dependent gene expression by acting as a link between T-box factors and the SMARCA4-containing SWI/SNF remodeling complex. The chain is Lysine-specific demethylase 6B (KDM6B) from Homo sapiens (Human).